A 443-amino-acid chain; its full sequence is GTPase Der (443 aa).

2 consecutive EngA-type G domains span residues 3–167 (PVIA…PEEK) and 176–349 (IKIA…QSIQ). Residues 9–16 (GRPNVGKS), 56–60 (DTGGL), 119–122 (NKAD), 182–189 (GRPNVGKS), 229–233 (DTAGI), and 294–297 (NKWD) each bind GTP. The KH-like domain maps to 350-434 (QELTTGQLTR…PVHIKLKTDP (85 aa)).

Belongs to the TRAFAC class TrmE-Era-EngA-EngB-Septin-like GTPase superfamily. EngA (Der) GTPase family. Associates with the 50S ribosomal subunit.

GTPase that plays an essential role in the late steps of ribosome biogenesis. This is GTPase Der from Coxiella burnetii (strain CbuK_Q154) (Coxiella burnetii (strain Q154)).